We begin with the raw amino-acid sequence, 374 residues long: 5-hydroxytryptamine receptor 1D (374 aa).

Residues 1–35 (MSPPNQSLEGLPQEASNRSLNVTGAWDPEVLQALR) lie on the Extracellular side of the membrane. N-linked (GlcNAc...) asparagine glycans are attached at residues asparagine 5, asparagine 17, and asparagine 21. The helical transmembrane segment at 36–61 (ISLVVVLSVITLATVLSNAFVLTTIL) threads the bilayer. The Cytoplasmic portion of the chain corresponds to 62-72 (LTKKLHTPANY). A helical transmembrane segment spans residues 73–94 (LIGSLATTDLLVSILVMPISIA). The Extracellular portion of the chain corresponds to 95-106 (YTTTRTWNFGQI). A helical transmembrane segment spans residues 107 to 131 (LCDIWVSSDITCCTASILHLCVIAL). Cysteine 108 and cysteine 185 are disulfide-bonded. Serotonin-binding residues include aspartate 115 and cysteine 119. The DRY motif; important for ligand-induced conformation changes motif lies at 132 to 134 (DRY). Residues 132 to 151 (DRYWAITDALEYSKRRTAGH) lie on the Cytoplasmic side of the membrane. Residues 152 to 173 (AAAMIAAVWIISICISIPPLFW) traverse the membrane as a helical segment. The Extracellular segment spans residues 174 to 191 (RQATAHEEMSDCLVNTSQ). A helical transmembrane segment spans residues 192 to 215 (ISYTIYSTCGAFYIPSILLIILYG). Residues 216–297 (RIYVAARSRI…ISAARERKAT (82 aa)) lie on the Cytoplasmic side of the membrane. Residues 298 to 323 (KTLGIILGAFIICWLPFFVVSLVLPI) form a helical membrane-spanning segment. Serotonin is bound at residue serine 318. The Extracellular portion of the chain corresponds to 324–332 (CRDSCWIHP). Residues 333 to 356 (ALFDFFTWLGYLNSLINPVIYTVF) form a helical membrane-spanning segment. The NPxxY motif; important for ligand-induced conformation changes and signaling signature appears at 349–353 (NPVIY). Residues 357-374 (NEDFRQAFQKVVHFRKIS) lie on the Cytoplasmic side of the membrane.

Belongs to the G-protein coupled receptor 1 family. In terms of assembly, homodimer. Heterodimer with HTR1B. In terms of tissue distribution, detected in the motor column in spinal cord, and in several cranial motor nuclei, including nucleus ambiguous, oculomotoris, trochelaris and abducens. Detected in gamma motor neurons in the lumbar spinal cord. Detected in proprioceptive sensory neurons in dorsal root ganglia.

The protein resides in the cell membrane. In terms of biological role, G-protein coupled receptor for 5-hydroxytryptamine (serotonin). Also functions as a receptor for ergot alkaloid derivatives, various anxiolytic and antidepressant drugs and other psychoactive substances. Ligand binding causes a conformation change that triggers signaling via guanine nucleotide-binding proteins (G proteins) and modulates the activity of downstream effectors, such as adenylate cyclase. HTR1D is coupled to G(i)/G(o) G alpha proteins and mediates inhibitory neurotransmission by inhibiting adenylate cyclase activity. Regulates the release of 5-hydroxytryptamine in the brain, and thereby affects neural activity. May also play a role in regulating the release of other neurotransmitters. May play a role in vasoconstriction. This chain is 5-hydroxytryptamine receptor 1D (Htr1d), found in Mus musculus (Mouse).